The chain runs to 276 residues: Rhomboid protease GlpG homolog (276 aa).

The next 6 membrane-spanning stretches (helical) occupy residues 94–114, 142–162, 168–188, 192–212, 225–245, and 252–272; these read GPLTLGMMALCVVAYLAMSII, LLLHFSLLSLIFNLLWWWYLA, SVGSGKLLTLTLVTALVGGVI, IAGPWFGGLGGVVYALVGYVW, LPRGILVFMLLWLAIGGLGLF, and ADLVAGMLIGLAMAMTDTLHA.

The protein belongs to the peptidase S54 family.

It localises to the cell inner membrane. The chain is Rhomboid protease GlpG homolog (glpG) from Cronobacter sakazakii (strain ATCC BAA-894) (Enterobacter sakazakii).